We begin with the raw amino-acid sequence, 263 residues long: Putative TATA-binding protein pB263R (263 aa).

Belongs to the asfivirus B263R family.

Its function is as follows. Putative TATA-binding protein. This African swine fever virus (isolate Pig/Kenya/KEN-50/1950) (ASFV) protein is Putative TATA-binding protein pB263R.